The chain runs to 179 residues: Large ribosomal subunit protein uL6 (179 aa).

This sequence belongs to the universal ribosomal protein uL6 family. Part of the 50S ribosomal subunit.

Functionally, this protein binds to the 23S rRNA, and is important in its secondary structure. It is located near the subunit interface in the base of the L7/L12 stalk, and near the tRNA binding site of the peptidyltransferase center. This Fructilactobacillus sanfranciscensis (Lactobacillus sanfranciscensis) protein is Large ribosomal subunit protein uL6.